Here is a 711-residue protein sequence, read N- to C-terminus: Zinc finger CCCH domain-containing protein 32 (711 aa).

Over residues 1–21 (MEADGAAAAAAAGEASTEAGA) the composition is skewed to low complexity. Residues 1 to 23 (MEADGAAAAAAAGEASTEAGARP) are disordered. C3H1-type zinc fingers lie at residues 31 to 60 (LRRNTDCVYFLASPLTCKKGNECDFRHSDN), 62 to 88 (RMNPRDCWYWLNSNCLNPKCPFRHPPI), and 112 to 139 (GKQLVPCYYFKKGNCLKGDRCAFYHGPQ). Disordered stretches follow at residues 221 to 246 (KSEKVKSSTPAALKESFTTSSGGDHP), 339 to 376 (RFNGMDEQDQMGHMYDGYERKRRRSSERSMERPFHSER), 405 to 561 (SSLA…EGPK), and 573 to 701 (AAWA…DDDD). Composition is skewed to basic and acidic residues over residues 364–376 (SERSMERPFHSER) and 413–427 (RNGEQRRRDERYRER). A compositionally biased stretch (basic residues) spans 428-437 (AHGHRSHRDH). 2 stretches are compositionally biased toward basic and acidic residues: residues 460-509 (SPDR…RRSS) and 585-594 (KQDKSAEVSH). Composition is skewed to acidic residues over residues 648 to 663 (EDIIEVDPVENQDADN) and 686 to 701 (ENAYEDDDEEYDDDDD).

This is Zinc finger CCCH domain-containing protein 32 from Oryza sativa subsp. japonica (Rice).